The primary structure comprises 718 residues: Protein spire homolog 2 (718 aa).

Disordered regions lie at residues 1 to 22 (MARA…ARPE) and 143 to 166 (DSSC…EGGP). The segment covering 10-21 (AAPERAGGAARP) has biased composition (low complexity). Positions 26–207 (LSLEEVLKVY…RALFVETLEL (182 aa)) constitute a KIND domain. 3 WH2 domains span residues 251 to 265 (QLMR…LKKV), 281 to 299 (PFEM…LRKV), and 345 to 362 (LHEK…LRPV). Ser-374 is subject to Phosphoserine. The interval 397 to 434 (TDTGSGSQRPRPRVLLKAPTLAEMEEMNTSEEEESPCG) is disordered. The segment covering 419–432 (EMEEMNTSEEEESP) has biased composition (acidic residues). Phosphoserine occurs at positions 443, 445, and 479. The tract at residues 456 to 518 (MASGLQSAAQ…SSLSSVDGPE (63 aa)) is disordered. Residues 496 to 513 (SGQSQPLPSSALPSSLSS) are compositionally biased toward low complexity. The segment at 538–558 (LALTVEEVVDVRRVLVKAEME) is spir-box.

It belongs to the spire family. As to expression, detected in oocytes.

The protein resides in the cytoplasm. Its subcellular location is the cytoskeleton. The protein localises to the cytosol. It localises to the cell membrane. It is found in the cytoplasmic vesicle membrane. In terms of biological role, acts as an actin nucleation factor, remains associated with the slow-growing pointed end of the new filament. Involved in intracellular vesicle transport along actin fibers, providing a novel link between actin cytoskeleton dynamics and intracellular transport. Required for asymmetric spindle positioning and asymmetric cell division during oocyte meiosis. Required for normal formation of the cleavage furrow and for polar body extrusion during female germ cell meiosis. Also acts in the nucleus: together with SPIRE1 and SPIRE2, promotes assembly of nuclear actin filaments in response to DNA damage in order to facilitate movement of chromatin and repair factors after DNA damage. The protein is Protein spire homolog 2 (Spire2) of Mus musculus (Mouse).